The primary structure comprises 584 residues: N(6)-adenosine-methyltransferase subunit METTL3 (584 aa).

2 disordered regions span residues 1 to 65 and 162 to 221; these read MSDT…EHPP and KADD…SNKV. A compositionally biased stretch (polar residues) spans 187-204; that stretch reads RKSSVSLATASISQLTAS. A Nuclear localization signal motif is present at residues 213–220; the sequence is DKKGRSNK. Residues 381–382 and aspartate 399 contribute to the S-adenosyl-L-methionine site; that span reads DI. A gate loop 1 region spans residues 400-414; it reads PPWDIHMELPYGTLT. Interaction with METTL14 stretches follow at residues 454-458 and 468-484; these read DRVDE and QRII…NHGK. Residues 466–483 are interphase loop; it reads QLQRIIRTGRTGHWLNHG. The tract at residues 469-482 is positively charged region required for RNA-binding; the sequence is RIIRTGRTGHWLNH. The tract at residues 511–519 is gate loop 2; sequence VRSTSHKPD. Residues lysine 517, 540 to 543, and 553 to 554 each bind S-adenosyl-L-methionine; these read RPHN and NQ.

The protein belongs to the MT-A70-like family. In terms of assembly, heterodimer; heterodimerizes with mettl14 to form an antiparallel heterodimer that constitutes an active methyltransferase. Component of the WMM complex, a N6-methyltransferase complex composed of a catalytic subcomplex, named MAC, and of an associated subcomplex, named MACOM. The MAC subcomplex is composed of mettl3 and mettl14. Expressed in the hemato-vascular system: enriched in sorted endothelial cells and haemogenic endothelium.

It localises to the nucleus. It is found in the nucleus speckle. The protein resides in the cytoplasm. It catalyses the reaction an adenosine in mRNA + S-adenosyl-L-methionine = an N(6)-methyladenosine in mRNA + S-adenosyl-L-homocysteine + H(+). Its function is as follows. The METTL3-METTL14 heterodimer forms a N6-methyltransferase complex that methylates adenosine residues at the N(6) position of some RNAs and regulates various processes such as the circadian clock, differentiation of embryonic and hematopoietic stem cells, cortical neurogenesis, response to DNA damage, differentiation of T-cells and primary miRNA processing. In the heterodimer formed with mettl14, mettl3 constitutes the catalytic core. N6-methyladenosine (m6A), which takes place at the 5'-[AG]GAC-3' consensus sites of some mRNAs, plays a role in mRNA stability, processing and translation efficiency. M6A is also involved in hematopoietic stem cells specification: m6A methylation and subsequent destabilization of mRNAs, such as notch1a, leads to decreased Notch signaling, promoting endothelial to hematopoietic transition. M6A also takes place in other RNA molecules, such as primary miRNA (pri-miRNAs). Mediates methylation of pri-miRNAs. This is N(6)-adenosine-methyltransferase subunit METTL3 from Danio rerio (Zebrafish).